The chain runs to 268 residues: Eukaryotic translation initiation factor 2 subunit beta (268 aa).

The span at 1-12 (MADEINEIREEQ) shows a compositional bias: basic and acidic residues. Positions 1–85 (MADEINEIRE…LNNESVDAGE (85 aa)) are disordered. A2 is subject to N-acetylalanine. 3 positions are modified to phosphoserine; by CK2: S42, S80, and S112. Residues 222 to 246 (CLGCKSPDTILSKENRLFFLRCEKC) form a C4-type zinc finger.

This sequence belongs to the eIF-2-beta/eIF-5 family. Eukaryotic translation initiation factor 2 eIF2 is a heterotrimeric complex composed of an alpha, a beta and a gamma subunit. Phosphorylated at Ser-42, Ser-80 and Ser-112 by CK2.

The protein localises to the cytoplasm. It is found in the cytosol. Functionally, component of the eIF2 complex that functions in the early steps of protein synthesis by forming a ternary complex with GTP and initiator tRNA. This complex binds to a 40S ribosomal subunit, followed by mRNA binding to form a 43S pre-initiation complex (43S PIC). Junction of the 60S ribosomal subunit to form the 80S initiation complex is preceded by hydrolysis of the GTP bound to eIF2 and release of an eIF2-GDP binary complex. In order for eIF2 to recycle and catalyze another round of initiation, the GDP bound to eIF2 must exchange with GTP by way of a reaction catalyzed by eIF2B. The chain is Eukaryotic translation initiation factor 2 subunit beta from Arabidopsis thaliana (Mouse-ear cress).